A 180-amino-acid polypeptide reads, in one-letter code: Inner membrane-spanning protein YciB (180 aa).

6 helical membrane-spanning segments follow: residues 4–24 (LLSE…GGGI), 25–45 (QSAT…CYII), 52–72 (LSII…ISGD), 76–96 (IKIK…TSGI), 118–138 (ITLS…NEIV), and 150–170 (FKVF…LPLL).

It belongs to the YciB family.

It is found in the cell inner membrane. In terms of biological role, plays a role in cell envelope biogenesis, maintenance of cell envelope integrity and membrane homeostasis. The polypeptide is Inner membrane-spanning protein YciB (Rickettsia bellii (strain RML369-C)).